Reading from the N-terminus, the 350-residue chain is S-adenosylmethionine:tRNA ribosyltransferase-isomerase (350 aa).

It belongs to the QueA family. As to quaternary structure, monomer.

The protein resides in the cytoplasm. The catalysed reaction is 7-aminomethyl-7-carbaguanosine(34) in tRNA + S-adenosyl-L-methionine = epoxyqueuosine(34) in tRNA + adenine + L-methionine + 2 H(+). Its pathway is tRNA modification; tRNA-queuosine biosynthesis. In terms of biological role, transfers and isomerizes the ribose moiety from AdoMet to the 7-aminomethyl group of 7-deazaguanine (preQ1-tRNA) to give epoxyqueuosine (oQ-tRNA). The sequence is that of S-adenosylmethionine:tRNA ribosyltransferase-isomerase from Vibrio campbellii (strain ATCC BAA-1116).